Here is a 683-residue protein sequence, read N- to C-terminus: Solute carrier organic anion transporter family member 2B1 (683 aa).

Residues 1 to 30 are disordered; the sequence is MPDRSTKTTMGTEDMHERKVSVEPQDSHQD. The Cytoplasmic segment spans residues 1–41; the sequence is MPDRSTKTTMGTEDMHERKVSVEPQDSHQDAQPRGMFHNIK. The segment covering 13–30 has biased composition (basic and acidic residues); it reads EDMHERKVSVEPQDSHQD. At serine 21 the chain carries Phosphoserine. A helical membrane pass occupies residues 42–61; sequence FFVLCHSLLQLTQLMISGYL. Topologically, residues 62 to 80 are extracellular; that stretch reads KSSISTVEKRFGLSSQISG. The helical transmembrane segment at 81–101 threads the bilayer; that stretch reads LLAAFNEVGNVSLILFVSYFG. Over 102–107 the chain is Cytoplasmic; sequence SRVHRP. Residues 108–132 traverse the membrane as a helical segment; it reads RMIGYGALLVATAGLLMALPHFISE. Residues 133–177 lie on the Extracellular side of the membrane; that stretch reads PYRYDHSSSDNRSLDFEASLCLPTTMAPASALSNGSCSSHTETKH. Asparagine 143 and asparagine 166 each carry an N-linked (GlcNAc...) asparagine glycan. The helical transmembrane segment at 178 to 207 threads the bilayer; sequence LTMVGIMFAAQTLLGIGGVPIQPFGISYID. Residues 208–226 are Cytoplasmic-facing; that stretch reads DFAHHSNSPLYIGILFGIT. Residues 227 to 247 traverse the membrane as a helical segment; that stretch reads TMGPGLAYGLGSLMLRLYVDI. Residues 248–265 are Extracellular-facing; that stretch reads DRMPEGGINLTPKDPRWV. Residues 266–290 traverse the membrane as a helical segment; the sequence is GAWWLGFLISSGLVVLASSPYFFFP. Residues 291–355 lie on the Cytoplasmic side of the membrane; sequence REMPKEKHEF…VKVFPRVLLR (65 aa). Serine 312 and serine 315 each carry phosphoserine. A helical membrane pass occupies residues 356–377; the sequence is NLRHPIFLLVVLSQVCTSSMVA. At 378–397 the chain is on the extracellular side; that stretch reads GMATFLPKFLERQFSITASF. The helical transmembrane segment at 398–421 threads the bilayer; sequence ANMLLGCLTIPLVIVGIMMGGVLV. The Cytoplasmic segment spans residues 422-425; it reads KRLH. The helical transmembrane segment at 426–449 threads the bilayer; sequence LSPVQCSALCLLGSLLCLLFSVPL. Residues 450 to 553 lie on the Extracellular side of the membrane; it reads FFIGCSTHQI…SACSRLVLPF (104 aa). One can recognise a Kazal-like domain in the interval 472–532; sequence PSLFPGCSEP…VFYTNCSCVA (61 aa). Intrachain disulfides connect cysteine 478/cysteine 509, cysteine 484/cysteine 505, and cysteine 493/cysteine 530. N-linked (GlcNAc...) asparagine glycosylation is found at asparagine 527 and asparagine 534. The helical transmembrane segment at 554–576 threads the bilayer; the sequence is IVLFSLGAGLASITHTPSFMLIL. Over 577-585 the chain is Cytoplasmic; it reads RGVKKEDKT. Residues 586–611 form a helical membrane-spanning segment; that stretch reads LAVGMQFMLLRVLAWMPSPVIHGSAI. At 612 to 644 the chain is on the extracellular side; that stretch reads DTTCVHWALTCGRRAVCRYYDHDLLRNRFIGLQ. A helical transmembrane segment spans residues 645-662; it reads FFFKSGSLVCFTLVLAIL. Residues 663–683 are Cytoplasmic-facing; it reads RQQSREASTRTTVKSSELQQL.

It belongs to the organo anion transporter (TC 2.A.60) family. In terms of tissue distribution, expressed in liver, kidney, small intestine mucosa, large intestine, brain, lung, spleen, stomach and heart.

The protein resides in the cell membrane. It localises to the basal cell membrane. Its subcellular location is the apical cell membrane. The catalysed reaction is dehydroepiandrosterone 3-sulfate(out) = dehydroepiandrosterone 3-sulfate(in). The enzyme catalyses estrone 3-sulfate(out) = estrone 3-sulfate(in). It carries out the reaction estrone 3-sulfate(out) + hydrogencarbonate(in) = estrone 3-sulfate(in) + hydrogencarbonate(out). It catalyses the reaction taurocholate(out) = taurocholate(in). The catalysed reaction is coproporphyrin III(out) = coproporphyrin III(in). The enzyme catalyses substance P(out) = substance P(in). It carries out the reaction pregnenolone sulfate(out) = pregnenolone sulfate(in). It catalyses the reaction prostaglandin E2(out) = prostaglandin E2(in). The catalysed reaction is prostaglandin D2(out) = prostaglandin D2(in). The enzyme catalyses L-thyroxine(out) = L-thyroxine(in). Mediates the Na(+)-independent transport of steroid sulfate conjugates such as estrone 3-sulfate (E1S), dehydroepiandrosterone sulfate (DHEA-S) and pregnenolone sulfate (PregS) and other specific organic anions. Responsible for the transport of E1S through the basal membrane of syncytiotrophoblast, highlighting a potential role in the placental absorption of fetal-derived sulfated steroids including DHEA-S. Also facilitates the uptake of sulfated steroids at the basal/sinusoidal membrane of hepatocytes, therefore accounting for the major part of organic anions clearance of liver. Mediates the intestinal uptake of sulfated steroids. Mediates the uptake of the neurosteroids DHEA-S and PregS into the endothelial cells of the blood-brain barrier as the first step to enter the brain. Also plays a role in the reuptake of neuropeptides such as substance P/TAC1 and vasoactive intestinal peptide/VIP released from retinal neurons. May act as a heme transporter that promotes cellular iron availability. Also transports heme by-product coproporphyrin III (CPIII), and may be involved in their hepatic disposition. Mediates the uptake of other substrates such as prostaglandins D2 (PGD2), E1 (PGE1) and E2 (PGE2), taurocholate, L-thyroxine, leukotriene C4 and thromboxane B2. May contribute to regulate the transport of organic compounds in testis across the blood-testis-barrier. Shows a pH-sensitive substrate specificity which may be ascribed to the protonation state of the binding site and leads to a stimulation of substrate transport in an acidic microenvironment. The exact transport mechanism has not been yet deciphered but most likely involves an anion exchange, coupling the cellular uptake of organic substrate with the efflux of an anionic compound. Hydrogencarbonate/HCO3(-) acts as a probable counteranion that exchanges for organic anions. Cytoplasmic glutamate may also act as counteranion in the placenta. An inwardly directed proton gradient has also been proposed as the driving force of E1S uptake with a (H(+):E1S) stoichiometry of (1:1). This Mus musculus (Mouse) protein is Solute carrier organic anion transporter family member 2B1.